The chain runs to 184 residues: Large ribosomal subunit protein uL10 (184 aa).

Belongs to the universal ribosomal protein uL10 family. As to quaternary structure, part of the ribosomal stalk of the 50S ribosomal subunit. The N-terminus interacts with L11 and the large rRNA to form the base of the stalk. The C-terminus forms an elongated spine to which L12 dimers bind in a sequential fashion forming a multimeric L10(L12)X complex.

Its function is as follows. Forms part of the ribosomal stalk, playing a central role in the interaction of the ribosome with GTP-bound translation factors. This is Large ribosomal subunit protein uL10 from Gluconobacter oxydans (strain 621H) (Gluconobacter suboxydans).